Consider the following 721-residue polypeptide: Protein Hook homolog 2 (721 aa).

The Calponin-homology (CH) domain occupies 7–123 (VELCDSLLTW…KMVQLVLGCA (117 aa)). Coiled-coil stretches lie at residues 181–425 (LSED…RCSH) and 484–659 (DLQN…EKLI). The segment at 696 to 721 (TNARRGQISRSHTLLPRYTDKRQSLS) is disordered.

It belongs to the hook family. Interacts with microtubules.

It localises to the cytoplasm. It is found in the cytoskeleton. The protein resides in the microtubule organizing center. The protein localises to the centrosome. Functionally, may function to promote vesicle trafficking and/or fusion. May contribute to the establishment and maintenance of centrosome function. The sequence is that of Protein Hook homolog 2 (hook2) from Xenopus laevis (African clawed frog).